Consider the following 598-residue polypeptide: MSSSDGKLRYDGRVAVVTGAGAGLGREYALLFAERGAKVVVNDLGGTHSGDGASQRAADIVVDEIRKAGGEAVADYNSVIDGAKVIETAIKAFGRVDILVNNAGILRDRSLVKTSEQDWNLVNDVHLKGSFKCTQAAFPYMKKQNYGRIIMTSSNSGIYGNFGQVNYTAAKMGLIGLANTVAIEGARNNVLCNVIVPTAASRMTEGILPDILFNELKPKLIAPVVAYLCHESCEDNGSYIESAAGWATKLHMVRGKGAVLRPSLDDPVTIEYVKDVWSNVTDMSKAKHLGAIAEASGTLLEVLEKLKEGGGDAIEDAFEFNSKELITYALGIGASVKNAKDMRFLYENDADFAAIPTFFVLPGLLLQMSTDKLLSKALPNSQVDFSNILHGEQYLEIVDDLPTSGTLLTNGKVFDVMDKGSGAVVVTNSESFDESGRLLVRNQSTTFIVGAGKFGGKKDPIAGVVPLQPAPNRQPDATVQYTTSEDQAALYRLSGDKNPLHIDPQMALLAGFKTPILHGLCTLGFSVRAVLAQFADNNPALFKAVKVRFSGPVIPGQTLRVDLWKQGTRINFRTVVVETGKEVISGAYVDLKSSQAKL.

The segment at 1-309 is (3R)-hydroxyacyl-CoA dehydrogenase; that stretch reads MSSSDGKLRY…LEVLEKLKEG (309 aa). NAD(+)-binding positions include 16–40, L24, D43, 78–79, and N102; these read VVTG…AKVV and SV. Residue S154 coordinates substrate. The Proton acceptor role is filled by Y167. NAD(+) contacts are provided by residues 167–171 and 199–202; these read YTAAK and AASR. Residues 310–598 form an enoyl-CoA hydratase 2 region; the sequence is GGDAIEDAFE…VDLKSSQAKL (289 aa). (3R)-3-hydroxydecanoyl-CoA contacts are provided by residues 390–391, K419, 496–501, G519, and F549; these read HG and DKNPLH. A MaoC-like domain is found at 469–586; it reads PAPNRQPDAT…VETGKEVISG (118 aa). Residues 596–598 carry the Microbody targeting signal motif; it reads AKL.

This sequence belongs to the short-chain dehydrogenases/reductases (SDR) family. Homodimer.

The protein resides in the peroxisome. It catalyses the reaction a (3R)-3-hydroxyacyl-CoA + NAD(+) = a 3-oxoacyl-CoA + NADH + H(+). The catalysed reaction is a (3R)-3-hydroxyacyl-CoA = a (2E)-enoyl-CoA + H2O. The protein operates within lipid metabolism; fatty acid beta-oxidation. Functionally, bifunctional enzyme acting on the peroxisomal beta-oxidation pathway for fatty acids. The protein is Peroxisomal multifunctional enzyme type 2 of Drosophila melanogaster (Fruit fly).